The following is a 260-amino-acid chain: Thiazole synthase (260 aa).

Lys102 functions as the Schiff-base intermediate with DXP in the catalytic mechanism. 1-deoxy-D-xylulose 5-phosphate is bound by residues Gly163, 189 to 190 (AG), and 211 to 212 (NT).

The protein belongs to the ThiG family. As to quaternary structure, homotetramer. Forms heterodimers with either ThiH or ThiS.

The protein localises to the cytoplasm. It carries out the reaction [ThiS sulfur-carrier protein]-C-terminal-Gly-aminoethanethioate + 2-iminoacetate + 1-deoxy-D-xylulose 5-phosphate = [ThiS sulfur-carrier protein]-C-terminal Gly-Gly + 2-[(2R,5Z)-2-carboxy-4-methylthiazol-5(2H)-ylidene]ethyl phosphate + 2 H2O + H(+). It participates in cofactor biosynthesis; thiamine diphosphate biosynthesis. Its function is as follows. Catalyzes the rearrangement of 1-deoxy-D-xylulose 5-phosphate (DXP) to produce the thiazole phosphate moiety of thiamine. Sulfur is provided by the thiocarboxylate moiety of the carrier protein ThiS. In vitro, sulfur can be provided by H(2)S. In Geotalea uraniireducens (strain Rf4) (Geobacter uraniireducens), this protein is Thiazole synthase.